The primary structure comprises 1250 residues: DNA-directed RNA polymerase subunit beta (1250 aa).

The tract at residues 1215-1250 (QDLNDDDINPDDTIDAELDDNLFDDDFDDTFDDDDL) is disordered.

Belongs to the RNA polymerase beta chain family. The RNAP catalytic core consists of 2 alpha, 1 beta, 1 beta' and 1 omega subunit. When a sigma factor is associated with the core the holoenzyme is formed, which can initiate transcription.

It catalyses the reaction RNA(n) + a ribonucleoside 5'-triphosphate = RNA(n+1) + diphosphate. DNA-dependent RNA polymerase catalyzes the transcription of DNA into RNA using the four ribonucleoside triphosphates as substrates. This chain is DNA-directed RNA polymerase subunit beta, found in Acetivibrio thermocellus (strain ATCC 27405 / DSM 1237 / JCM 9322 / NBRC 103400 / NCIMB 10682 / NRRL B-4536 / VPI 7372) (Clostridium thermocellum).